We begin with the raw amino-acid sequence, 381 residues long: tRNA-specific 2-thiouridylase MnmA (381 aa).

ATP is bound by residues 9-16 (GMSGGVDS) and Met-35. The segment at 95 to 97 (NPD) is interaction with target base in tRNA. Cys-100 (nucleophile) is an active-site residue. The cysteines at positions 100 and 196 are disulfide-linked. Residue Gly-124 coordinates ATP. The segment at 146–148 (KDQ) is interaction with tRNA. Cys-196 serves as the catalytic Cysteine persulfide intermediate. Residues 308-309 (RY) form an interaction with tRNA region.

This sequence belongs to the MnmA/TRMU family.

The protein localises to the cytoplasm. The catalysed reaction is S-sulfanyl-L-cysteinyl-[protein] + uridine(34) in tRNA + AH2 + ATP = 2-thiouridine(34) in tRNA + L-cysteinyl-[protein] + A + AMP + diphosphate + H(+). Functionally, catalyzes the 2-thiolation of uridine at the wobble position (U34) of tRNA, leading to the formation of s(2)U34. This Paraburkholderia xenovorans (strain LB400) protein is tRNA-specific 2-thiouridylase MnmA.